The sequence spans 432 residues: Guanine/hypoxanthine permease PbuO (432 aa).

10 consecutive transmembrane segments (helical) span residues 15 to 35, 51 to 71, 92 to 112, 133 to 153, 174 to 194, 196 to 216, 234 to 254, 340 to 360, 379 to 399, and 412 to 432; these read IIAG…NPVI, IIAS…PIAI, GITY…FIIL, ITTG…GIVA, LVGL…ALFI, MAAT…KGFM, FGDV…LVTI, ALSG…SLMM, LVIL…LGFI, and REIH…LFIL.

The protein belongs to the nucleobase:cation symporter-2 (NCS2) (TC 2.A.40) family. Azg-like subfamily.

The protein localises to the cell membrane. Functionally, involved in the uptake of the purine bases hypoxanthine and guanine. May work at purine concentrations higher than 100 uM. This chain is Guanine/hypoxanthine permease PbuO (pbuO), found in Bacillus subtilis (strain 168).